A 428-amino-acid polypeptide reads, in one-letter code: Putative aspergillopepsin A-like aspartic endopeptidase AFUA_2G15950 (428 aa).

Positions 1–19 are cleaved as a signal peptide; it reads MHSLQSFLFLLLLGYGVFA. The propeptide at 20 to 90 is activation peptide; it reads APTSPQAQSQ…GTAANLVTDV (71 aa). In terms of domain architecture, Peptidase A1 spans 110 to 425; sequence FVSPVTIGGQ…DLRGPSIGLA (316 aa). The active site involves Asp126. N-linked (GlcNAc...) asparagine glycosylation is present at Asn276. Residue Asp312 is part of the active site. Asn380 carries an N-linked (GlcNAc...) asparagine glycan.

This sequence belongs to the peptidase A1 family.

The protein resides in the secreted. The protein is Putative aspergillopepsin A-like aspartic endopeptidase AFUA_2G15950 of Aspergillus fumigatus (strain ATCC MYA-4609 / CBS 101355 / FGSC A1100 / Af293) (Neosartorya fumigata).